Reading from the N-terminus, the 335-residue chain is NmrA-like family domain-containing oxidoreductase hkm9 (335 aa).

NADP(+) is bound by residues 12-17 (GATGNQ), 38-42 (RNPNS), 59-60 (DG), 80-82 (INS), lysine 137, and 161-164 (YLEN).

Belongs to the NmrA-type oxidoreductase family.

Its pathway is secondary metabolite biosynthesis. In terms of biological role, nmrA-like family domain-containing oxidoreductase; part of the gene cluster that mediates the biosynthesis of hancockiamides, an unusual new family of N-cinnamoylated piperazines. The NRPS hkm10 and the NmrA-like reductase hkm9 are proposed to convert two molecules of L-Phe to the intermediary piperazine called xenocockiamide A. Xenocockiamide A is then converted to hancockiamide D via a series of hydroxylations and O-methylations. The tyrosinase hkm6 may catalyze an aromatic hydroxylation, then the 2-oxoglutarate-dependent Fe(II) dioxygenase hkm4 and the FAD-dependent phenol hydroxylase hkm7 may catalyze consecutive hydroxylations to install 2 more hydroxy groups, and the methyltransferase hkm8 probably catalyzes two methylations using 2 molecules of S-adenosyl-L-methionine (SAM). The NRPS hkm11 activates and transfers trans-cinnamate supplied by the PAL hkm12 to hancockiamide D and produces hancockiamide A. NRPS Hkm11 has the flexibility to tolerate the bulky hancockiamide G as a substrate and the absence of the acetyl-transferase hkm3 opens up the opportunity for hkm11 to introduce a second N-cinnamoyl moiety. The cytochrome P450 monooxygenase hkm5 catalyzes the methylenedioxy bridge formation, converting hancockiamide A into hancockiamide G. Hkm5 can also convert hancockiamide B into hancockiamide C, and hancockiamide D into hancockiamide H. The N-acetyltransferase hkm3 finally transfers an acetyl group to 1-N of piperazine, converting hancockiamide A into hancockiamide B and hancockiamide G into hancockiamide C. The sequence is that of NmrA-like family domain-containing oxidoreductase hkm9 from Aspergillus hancockii.